The following is a 177-amino-acid chain: Large ribosomal subunit protein uL5 (177 aa).

Belongs to the universal ribosomal protein uL5 family. As to quaternary structure, part of the 50S ribosomal subunit; contacts the 5S rRNA and probably tRNA. Forms a bridge to the 30S subunit in the 70S ribosome.

Its function is as follows. This is one of the proteins that bind and probably mediate the attachment of the 5S RNA into the large ribosomal subunit, where it forms part of the central protuberance. In the 70S ribosome it contacts protein S13 of the 30S subunit (bridge B1b), connecting the 2 subunits; this bridge is implicated in subunit movement. May contact the P site tRNA; the 5S rRNA and some of its associated proteins might help stabilize positioning of ribosome-bound tRNAs. The chain is Large ribosomal subunit protein uL5 from Sulfurisphaera tokodaii (strain DSM 16993 / JCM 10545 / NBRC 100140 / 7) (Sulfolobus tokodaii).